The following is a 35-amino-acid chain: Probable endonuclease 4 (35 aa).

Glutamate 15 lines the Zn(2+) pocket.

The protein belongs to the AP endonuclease 2 family. It depends on Zn(2+) as a cofactor.

The catalysed reaction is Endonucleolytic cleavage to 5'-phosphooligonucleotide end-products.. In terms of biological role, endonuclease IV plays a role in DNA repair. It cleaves phosphodiester bonds at apurinic or apyrimidinic (AP) sites, generating a 3'-hydroxyl group and a 5'-terminal sugar phosphate. In Yersinia enterocolitica, this protein is Probable endonuclease 4 (nfo).